Consider the following 2839-residue polypeptide: MPITQDNAVLHLPLLYQWLQNSLQEGGDGPEQRLCQAAIQKLQEYIQLNFAVDESTVPPDHSPPEMEICTVYLTKELGDTETVGLSFGNIPVFGDYGEKRRGGKKRKTHQGPVLDVGCIWVTELRKNSPAGKSGKVRLRDEILSLNGQLMVGVDVSGASYLAEQCWNGGFIYLIMLRRFKHKAHSTYNGNSSNSSEPGETPTLELGDRTAKKGKRTRKFGVISRPPANKAPEESKGSAGCEVSSDPSTELENGPDPELGNGHVFQLENGPDSLKEVAGPHLERSEVDRGTEHRIPKTDAPLTTSNDKRRFSKGGKTDFQSSDCLAREEVGRIWKMELLKESDGLGIQVSGGRGSKRSPHAIVVTQVKEGGAAHRDGRLSLGDELLVINGHLLVGLSHEEAVAILRSATGMVQLVVASKENSAEDLLRLTSKSLPDLTSSVEDVSSWTDNEDQEADGEEDEGTSSSVQRAMPGTDEPQDVCGAEESKGNLESPKQGSNKIKLKSRLSGGVHRLESVEEYNELMVRNGDPRIRMLEVSRDGRKHSLPQLLDSSSASQEYHIVKKSTRSLSTTQVESPWRLIRPSVISIIGLYKEKGKGLGFSIAGGRDCIRGQMGIFVKTIFPNGSAAEDGRLKEGDEILDVNGIPIKGLTFQEAIHTFKQIRSGLFVLTVRTKLVSPSLTPCSTPTHMSRSASPNFNTSGGASAGGSDEGSSSSLGRKTPGPKDRIVMEVTLNKEPRVGLGIGACCLALENSPPGIYIHSLAPGSVAKMESNLSRGDQILEVNSVNVRHAALSKVHAILSKCPPGPVRLVIGRHPNPKVSEQEMDEVIARSTYQESKEANSSPGLGTPLKSPSLAKKDSLISESELSQYFAHDVPGPLSDFMVAGSEDEDHPGSGCSTSEEGSLPPSTSTHKEPGKPRANSLVTLGSHRASGLFHKQVTVARQASLPGSPQALRNPLLRQRKVGCYDANDASDEEEFDREGDCISLPGALPGPIRPLSEDDPRRVSISSSKGMDVHNQEERPRKTLVSKAISAPLLGSSVDLEESIPEGMVDAASYAANLTDSAEAPKGSPGSWWKKELSGSSSAPKLEYTVRTDTQSPTNTGSPSSPQQKSEGLGSRHRPVARVSPHCKRSEAEAKPSGSQTVNLTGRANDPCDLDSRVQATSVKVTVAGFQPGGAVEKESLGKLTTGDACVSTSCELASALSHLDASHLTENLPKAASELGQQPMTELDSSSDLISSPGKKGAAHPDPSKTSVDTGQVSRPENPSQPASPRVTKCKARSPVRLPHEGSPSPGEKAAAPPDYSKTRSASETSTPHNTRRVAALRGAGPGAEGMTPAGAVLPGDPLTSQEQRQGAPGNHSKALEMTGIHAPESSQEPSLLEGADSVSSRAPQASLSMLPSTDNTKEACGHVSGHCCPGGSRESPVTDIDSFIKELDASAARSPSSQTGDSGSQEGSAQGHPPAGAGGGSSCRAEPVPGGQTSSPRRAWAAGAPAYPQWASQPSVLDSINPDKHFTVNKNFLSNYSRNFSSFHEDSTSLSGLGDSTEPSLSSMYGDAEDSSSDPESLTEAPRASARDGWSPPRSRVSLHKEDPSESEEEQIEICSTRGCPNPPSSPAHLPTQAAICPASAKVLSLKYSTPRESVASPREKAACLPGSYTSGPDSSQPSSLLEMSSQEHETHADISTSQNHRPSCAEETTEVTSASSAMENSPLSKVARHFHSPPIILSSPNMVNGLEHDLLDDETLNQYETSINAAASLSSFSVDVPKNGESVLENLHISESQDLDDLLQKPKMIARRPIMAWFKEINKHNQGTHLRSKTEKEQPLMPARSPDSKIQMVSSSQKKGVTVPHSPPQPKTNLENKDLSKKSPAEMLLTNGQKAKCGPKLKRLSLKGKAKVNSEAPAANAVKAGGTDHRKPLISPQTSHKTLSKAVSQRLHVADHEDPDRNTTAAPRSPQCVLESKPPLATSGPLKPSVSDTSIRTFVSPLTSPKPVPEQGMWSRFHMAVLSEPDRGCPTTPKSPKCRAEGRAPRADSGPVSPAASRNGMSVAGNRQSEPRLASHVAADTAQPRPTGEKGGNIMASDRLERTNQLKIVEISAEAVSETVCGNKPAESDRRGGCLAQGNCQEKSEIRLYRQVAESSTSHPSSLPSHASQAEQEMSRSFSMAKLASSSSSLQTAIRKAEYSQGKSSLMSDSRGVPRNSIPGGPSGEDHLYFTPRPATRTYSMPAQFSSHFGREGHPPHSLGRSRDSQVPVTSSVVPEAKASRGGLPSLANGQGIYSVKPLLDTSRNLPATDEGDIISVQETSCLVTDKIKVTRRHYCYEQNWPHESTSFFSVKQRIKSFENLANADRPVAKSGASPFLSVSSKPPIGRRSSGSIVSGSLGHPGDAAARLLRRSLSSCSENQSEAGTLLPQMAKSPSIMTLTISRQNPPETSSKGSDSELKKSLGPLGIPTPTMTLASPVKRNKSSVRHTQPSPVSRSKLQELRALSMPDLDKLCSEDYSAGPSAVLFKTELEITPRRSPGPPAGGVSCPEKGGNRACPGGSGPKTSAAETPSSASDTGEAAQDLPFRRSWSVNLDQLLVSAGDQQRLQSVLSSVGSKSTILTLIQEAKAQSENEEDVCFIVLNRKEGSGLGFSVAGGTDVEPKSITVHRVFSQGAASQEGTMNRGDFLLSVNGASLAGLAHGNVLKVLHQAQLHKDALVVIKKGMDQPRPSARQEPPTANGKGLLSRKTIPLEPGIGRSVAVHDALCVEVLKTSAGLGLSLDGGKSSVTGDGPLVIKRVYKGGAAEQAGIIEAGDEILAINGKPLVGLMHFDAWNIMKSVPEGPVQLLIRKHRNSS.

Residues 85 to 182 form the PDZ 1 domain; sequence LSFGNIPVFG…LIMLRRFKHK (98 aa). Residues 185 to 318 are disordered; sequence STYNGNSSNS…RFSKGGKTDF (134 aa). Over residues 189-202 the composition is skewed to low complexity; the sequence is GNSSNSSEPGETPT. Over residues 280-296 the composition is skewed to basic and acidic residues; sequence HLERSEVDRGTEHRIPK. One can recognise a PDZ 2 domain in the interval 334–419; sequence KMELLKESDG…MVQLVVASKE (86 aa). Polar residues predominate over residues 437–447; sequence TSSVEDVSSWT. Residues 437–501 are disordered; that stretch reads TSSVEDVSSW…PKQGSNKIKL (65 aa). Acidic residues predominate over residues 448-461; sequence DNEDQEADGEEDEG. Phosphoserine is present on Ser-568. One can recognise a PDZ 3 domain in the interval 586–672; that stretch reads IIGLYKEKGK…GLFVLTVRTK (87 aa). The span at 678–697 shows a compositional bias: polar residues; that stretch reads LTPCSTPTHMSRSASPNFNT. Positions 678 to 723 are disordered; sequence LTPCSTPTHMSRSASPNFNTSGGASAGGSDEGSSSSLGRKTPGPKD. In terms of domain architecture, PDZ 4 spans 728 to 813; that stretch reads EVTLNKEPRV…GPVRLVIGRH (86 aa). Polar residues-rich tracts occupy residues 832–843 and 894–908; these read YQESKEANSSPG and GCST…PSTS. Disordered regions lie at residues 832–852 and 879–921; these read YQES…KSPS and DFMV…ANSL. Ser-944 and Ser-948 each carry phosphoserine. Disordered regions lie at residues 984-1033, 1062-1155, 1216-1493, 1530-1620, 1638-1712, 1809-1865, 1892-1976, 2009-2079, 2135-2166, 2178-2211, 2232-2251, 2353-2383, 2426-2481, and 2516-2564; these read SLPG…ISAP, SAEA…PCDL, KAAS…GAPA, FHED…LPTQ, PRES…SPLS, NQGT…DLSK, GKAK…SVSD, PDRG…GNIM, QVAE…SMAK, IRKA…GEDH, HFGR…DSQV, AKSG…GSLG, SRQN…SRSK, and ITPR…GEAA. Residues 1012–1022 are compositionally biased toward basic and acidic residues; that stretch reads MDVHNQEERPR. Composition is skewed to polar residues over residues 1092 to 1111, 1138 to 1147, 1221 to 1236, 1250 to 1269, 1305 to 1315, 1384 to 1401, and 1440 to 1453; these read RTDT…QQKS, SGSQTVNLTG, LGQQ…SDLI, SKTS…SQPA, TRSASETSTPH, SVSS…PSTD, and RSPS…GSQE. Over residues 1662-1672 the composition is skewed to low complexity; the sequence is SSQPSSLLEMS. Over residues 1698–1711 the composition is skewed to polar residues; it reads EVTSASSAMENSPL. Residue Ser-1850 is modified to Phosphoserine. Polar residues predominate over residues 1919 to 1931; that stretch reads SPQTSHKTLSKAV. The segment covering 1936–1945 has biased composition (basic and acidic residues); the sequence is HVADHEDPDR. The span at 2139-2152 shows a compositional bias: low complexity; that stretch reads SSTSHPSSLPSHAS. Residues 2370-2383 are compositionally biased toward low complexity; the sequence is GRRSSGSIVSGSLG. 3 stretches are compositionally biased toward polar residues: residues 2426-2437, 2470-2480, and 2546-2559; these read SRQNPPETSSKG, RHTQPSPVSRS, and PKTS…SASD. A PDZ 5 domain is found at 2622–2706; that stretch reads FIVLNRKEGS…HKDALVVIKK (85 aa). The disordered stretch occupies residues 2709–2729; that stretch reads DQPRPSARQEPPTANGKGLLS. In terms of domain architecture, PDZ 6 spans 2750-2835; sequence CVEVLKTSAG…GPVQLLIRKH (86 aa).

As to quaternary structure, interacts with SCN10A, CTNND2 and PKP4. Post-translationally, a secreted form is produced by caspase-mediated proteolytic cleavage. As to expression, isoform 2 is expressed (at protein level) in prostate and many prostate tumors.

Its subcellular location is the nucleus. The protein resides in the cytoplasm. The protein localises to the endoplasmic reticulum. It is found in the secreted. This Homo sapiens (Human) protein is PDZ domain-containing protein 2 (PDZD2).